The primary structure comprises 1081 residues: FHF complex subunit HOOK-interacting protein 1A (1081 aa).

4 disordered regions span residues 474–496 (SEEQ…PPPA), 544–623 (PETF…DPPK), 658–770 (EKDT…ENEP), and 863–883 (EAGS…RHPV). The segment covering 486–496 (PSSPSPPPPPA) has biased composition (pro residues). Residues 553–564 (EESRENSGHPEA) show a composition bias toward basic and acidic residues. Residues 567–576 (PQQSVRTSGQ) show a composition bias toward polar residues. Positions 680-707 (EPLEDTSEQQEDTSEQLEDTSELQEDTA) are enriched in acidic residues. Composition is skewed to polar residues over residues 727-738 (EAQSLPTSNGPL) and 746-762 (ESQP…NTFS).

The protein belongs to the FHIP family. As to quaternary structure, may be a component of the FTS/Hook/FHIP complex (FHF complex), composed of AKTIP/FTS, FHIP1B, and one or more members of the Hook family of proteins HOOK1, HOOK2, and HOOK3. May interact directly with AKTIP/FTS.

Its function is as follows. Probable component of the FTS/Hook/FHIP complex (FHF complex). FHF complex promotes the distribution of AP-4 complex to the perinuclear area of the cell. The sequence is that of FHF complex subunit HOOK-interacting protein 1A from Mus musculus (Mouse).